The primary structure comprises 68 residues: DNA-directed RNA polymerase subunit omega (68 aa).

This sequence belongs to the RNA polymerase subunit omega family. The RNAP catalytic core consists of 2 alpha, 1 beta, 1 beta' and 1 omega subunit. When a sigma factor is associated with the core the holoenzyme is formed, which can initiate transcription.

The catalysed reaction is RNA(n) + a ribonucleoside 5'-triphosphate = RNA(n+1) + diphosphate. Promotes RNA polymerase assembly. Latches the N- and C-terminal regions of the beta' subunit thereby facilitating its interaction with the beta and alpha subunits. The sequence is that of DNA-directed RNA polymerase subunit omega from Citrifermentans bemidjiense (strain ATCC BAA-1014 / DSM 16622 / JCM 12645 / Bem) (Geobacter bemidjiensis).